The sequence spans 41 residues: Large ribosomal subunit protein bL36 (41 aa).

The protein belongs to the bacterial ribosomal protein bL36 family.

The chain is Large ribosomal subunit protein bL36 from Opitutus terrae (strain DSM 11246 / JCM 15787 / PB90-1).